A 311-amino-acid polypeptide reads, in one-letter code: Olfactory receptor 1N1 (311 aa).

Residues 1-23 (MENQSSISEFFLRGISAPPEQQQ) are Extracellular-facing. Asn3 is a glycosylation site (N-linked (GlcNAc...) asparagine). Residues 24-47 (SLFGIFLCMYLVTLTGNLLIILAI) traverse the membrane as a helical segment. Residues 48–55 (GSDLHLHT) lie on the Cytoplasmic side of the membrane. The helical transmembrane segment at 56 to 77 (PMYFFLANLSFVDMGLTSSTVT) threads the bilayer. The Extracellular portion of the chain corresponds to 78–98 (KMLVNIQTRHHTISYTGCLTQ). Residues Cys95 and Cys187 are joined by a disulfide bond. The chain crosses the membrane as a helical span at residues 99 to 118 (MYFFLMFGDLDSFFLAAMAY). The Cytoplasmic segment spans residues 119–137 (DRYVAICHPLCYSTVMRPQ). Residues 138–156 (VCALMLALCWVLTNIVALT) form a helical membrane-spanning segment. Topologically, residues 157 to 194 (HTFLMARLSFCVTGEIAHFFCDITPVLKLSCSDTHINE) are extracellular. Residues 195–217 (MMVFVLGGTVLIVPFLCIVTSYI) traverse the membrane as a helical segment. At 218-234 (HIVPAILRVRTRGGVGK) the chain is on the cytoplasmic side. Residues 235-257 (AFSTCSSHLCVVCVFYGTLFSAY) traverse the membrane as a helical segment. The Extracellular segment spans residues 258-270 (LCPPSIASEEKDI). A helical membrane pass occupies residues 271 to 290 (AAAAMYTIVTPMLNPFIYSL). The Cytoplasmic portion of the chain corresponds to 291 to 311 (RNKDMKGALKRLFSHRSIVSS).

Belongs to the G-protein coupled receptor 1 family.

Its subcellular location is the cell membrane. Odorant receptor. The chain is Olfactory receptor 1N1 (OR1N1) from Homo sapiens (Human).